Reading from the N-terminus, the 197-residue chain is uncharacterized protein (197 aa).

Transmembrane regions (helical) follow at residues 5–23, 27–46, 55–77, 87–109, 116–138, and 153–174; these read LNLL…GLRF, ISFA…MLRF, VIAG…LAYT, LSLL…VIRI, VFAF…LPTG, and FVEF…CLVF.

It localises to the cell membrane. This is an uncharacterized protein from Archaeoglobus fulgidus (strain ATCC 49558 / DSM 4304 / JCM 9628 / NBRC 100126 / VC-16).